Here is a 333-residue protein sequence, read N- to C-terminus: PDZ domain-containing protein GIPC1 (333 aa).

Residues 1–11 are compositionally biased toward basic residues; sequence MPLGLGRRKKA. The disordered stretch occupies residues 1–55; that stretch reads MPLGLGRRKKAPPLVENEEAEPSRSGLGVGEPGPLGGSGAGESQMGLPPPPASLR. A compositionally biased stretch (gly residues) spans 27 to 40; the sequence is LGVGEPGPLGGSGA. Ser-68 carries the phosphoserine modification. One can recognise a PDZ domain in the interval 133 to 213; it reads EVEVFKSEDA…GRTFTLKLTE (81 aa). The disordered stretch occupies residues 221–244; it reads ISQRSSGGHPGSGPQLGTGRGTLR. Residues Ser-222, Ser-225, and Ser-232 each carry the phosphoserine modification. The span at 228–240 shows a compositional bias: gly residues; it reads GHPGSGPQLGTGR. Residue Thr-242 is modified to Phosphothreonine. Position 247 is a phosphoserine (Ser-247).

It belongs to the GIPC family. In terms of assembly, interacts with SDC4/syndecan-4 and SEMA4C/semaphorin-4C. Interacts with RGS19 (C-terminus), GLUT1 (C-terminus), ACTN1, KIF1B, MYO6 and PLEKHG5. In terms of tissue distribution, widely expressed.

The protein localises to the cytoplasm. The protein resides in the membrane. In terms of biological role, may be involved in G protein-linked signaling. In Rattus norvegicus (Rat), this protein is PDZ domain-containing protein GIPC1 (Gipc1).